The primary structure comprises 61 residues: Sperm protamine P1 (61 aa).

The interval 1 to 61 (MARYRRRSRS…RRYSRRGRRR (61 aa)) is disordered.

Belongs to the protamine P1 family. In terms of tissue distribution, testis.

The protein resides in the nucleus. The protein localises to the chromosome. Functionally, protamines substitute for histones in the chromatin of sperm during the haploid phase of spermatogenesis. They compact sperm DNA into a highly condensed, stable and inactive complex. The polypeptide is Sperm protamine P1 (PRM1) (Dasyurus hallucatus (Northern quoll)).